A 340-amino-acid polypeptide reads, in one-letter code: tRNA N6-adenosine threonylcarbamoyltransferase (340 aa).

2 residues coordinate Fe cation: H111 and H115. Residues 134 to 138 (LVSGG), D167, G180, and N276 contribute to the substrate site. Position 304 (D304) interacts with Fe cation.

The protein belongs to the KAE1 / TsaD family. Requires Fe(2+) as cofactor.

It is found in the cytoplasm. The enzyme catalyses L-threonylcarbamoyladenylate + adenosine(37) in tRNA = N(6)-L-threonylcarbamoyladenosine(37) in tRNA + AMP + H(+). Functionally, required for the formation of a threonylcarbamoyl group on adenosine at position 37 (t(6)A37) in tRNAs that read codons beginning with adenine. Is involved in the transfer of the threonylcarbamoyl moiety of threonylcarbamoyl-AMP (TC-AMP) to the N6 group of A37, together with TsaE and TsaB. TsaD likely plays a direct catalytic role in this reaction. This is tRNA N6-adenosine threonylcarbamoyltransferase from Helicobacter pylori (strain P12).